The chain runs to 322 residues: Pilin gene-inverting protein (322 aa).

May be the site-specific invertase required for pilin gene inversion. Moraxella can express either a Q or I pilin; the inversion of 2 kb of DNA determines which pilin is expressed. This is Pilin gene-inverting protein (piv) from Moraxella lacunata.